A 311-amino-acid polypeptide reads, in one-letter code: 4-hydroxy-tetrahydrodipicolinate synthase (311 aa).

Thr-49 serves as a coordination point for pyruvate. The Proton donor/acceptor role is filled by Tyr-138. The active-site Schiff-base intermediate with substrate is the Lys-166. Residue Ile-207 coordinates pyruvate.

The protein belongs to the DapA family. As to quaternary structure, homotetramer; dimer of dimers.

The protein resides in the cytoplasm. It carries out the reaction L-aspartate 4-semialdehyde + pyruvate = (2S,4S)-4-hydroxy-2,3,4,5-tetrahydrodipicolinate + H2O + H(+). It participates in amino-acid biosynthesis; L-lysine biosynthesis via DAP pathway; (S)-tetrahydrodipicolinate from L-aspartate: step 3/4. Its function is as follows. Catalyzes the condensation of (S)-aspartate-beta-semialdehyde [(S)-ASA] and pyruvate to 4-hydroxy-tetrahydrodipicolinate (HTPA). In Limosilactobacillus fermentum (strain NBRC 3956 / LMG 18251) (Lactobacillus fermentum), this protein is 4-hydroxy-tetrahydrodipicolinate synthase.